The sequence spans 1486 residues: Chromosome partition protein MukB (1486 aa).

Position 34 to 41 (34 to 41 (GGNGAGKS)) interacts with ATP. Coiled coils occupy residues 326–418 (LEAD…QYNQ), 444–480 (LETF…QAYQ), and 509–603 (RHLA…RAPV). Positions 666–783 (PGGSEDQRLN…EVPLFGRAAR (118 aa)) are flexible hinge. Coiled coils occupy residues 835–923 (EAEI…AKLE), 977–1115 (EMLS…TAKA), and 1209–1266 (VEAI…QNVS).

It belongs to the SMC family. MukB subfamily. As to quaternary structure, homodimerization via its hinge domain. Binds to DNA via its C-terminal region. Interacts, and probably forms a ternary complex, with MukE and MukF via its C-terminal region. The complex formation is stimulated by calcium or magnesium. Interacts with tubulin-related protein FtsZ.

It localises to the cytoplasm. The protein localises to the nucleoid. Functionally, plays a central role in chromosome condensation, segregation and cell cycle progression. Functions as a homodimer, which is essential for chromosome partition. Involved in negative DNA supercoiling in vivo, and by this means organize and compact chromosomes. May achieve or facilitate chromosome segregation by condensation DNA from both sides of a centrally located replisome during cell division. The sequence is that of Chromosome partition protein MukB from Escherichia coli (strain ATCC 8739 / DSM 1576 / NBRC 3972 / NCIMB 8545 / WDCM 00012 / Crooks).